The following is a 419-amino-acid chain: UDP-N-acetylglucosamine 1-carboxyvinyltransferase 2 (419 aa).

Position 22-23 (22-23 (KN)) interacts with phosphoenolpyruvate. R92 contacts UDP-N-acetyl-alpha-D-glucosamine. The active-site Proton donor is C116. C116 carries the 2-(S-cysteinyl)pyruvic acid O-phosphothioketal modification. UDP-N-acetyl-alpha-D-glucosamine-binding positions include 121-125 (RPIDL), D306, and I328.

It belongs to the EPSP synthase family. MurA subfamily.

It localises to the cytoplasm. It catalyses the reaction phosphoenolpyruvate + UDP-N-acetyl-alpha-D-glucosamine = UDP-N-acetyl-3-O-(1-carboxyvinyl)-alpha-D-glucosamine + phosphate. Its pathway is cell wall biogenesis; peptidoglycan biosynthesis. In terms of biological role, cell wall formation. Adds enolpyruvyl to UDP-N-acetylglucosamine. The polypeptide is UDP-N-acetylglucosamine 1-carboxyvinyltransferase 2 (Streptococcus mutans serotype c (strain ATCC 700610 / UA159)).